Consider the following 593-residue polypeptide: Arylsulfatase D (593 aa).

Residues 1 to 33 form the signal peptide; sequence MRSAARRGRAAPAARDSLPVLLFLCLLLKTCEP. Residues D49 and D50 each contribute to the Ca(2+) site. N-linked (GlcNAc...) asparagine glycosylation is present at N61. Residue C89 coordinates Ca(2+). C89 functions as the Nucleophile in the catalytic mechanism. C89 carries the post-translational modification 3-oxoalanine (Cys). Residue N128 is glycosylated (N-linked (GlcNAc...) asparagine). K148 is a substrate binding site. H150 is a catalytic residue. H304 contacts substrate. An N-linked (GlcNAc...) asparagine glycan is attached at N347. Ca(2+) is bound by residues D356 and H357. K381 lines the substrate pocket.

It belongs to the sulfatase family. It depends on Ca(2+) as a cofactor. In terms of processing, the conversion to 3-oxoalanine (also known as C-formylglycine, FGly), of a serine or cysteine residue in prokaryotes and of a cysteine residue in eukaryotes, is critical for catalytic activity. In terms of tissue distribution, expressed in the pancreas, kidney, liver, lung, placenta, brain and heart.

It is found in the lysosome. The sequence is that of Arylsulfatase D (ARSD) from Homo sapiens (Human).